The primary structure comprises 205 residues: Adenylyl-sulfate kinase (205 aa).

Residue 31–38 (GLSGAGKS) coordinates ATP. The active-site Phosphoserine intermediate is the Ser-105.

The protein belongs to the APS kinase family.

It carries out the reaction adenosine 5'-phosphosulfate + ATP = 3'-phosphoadenylyl sulfate + ADP + H(+). Its pathway is sulfur metabolism; hydrogen sulfide biosynthesis; sulfite from sulfate: step 2/3. Its function is as follows. Catalyzes the synthesis of activated sulfate. This is Adenylyl-sulfate kinase from Shewanella baltica (strain OS195).